The following is a 543-amino-acid chain: Periplasmic oligopeptide-binding protein OppA (543 aa).

An N-terminal signal peptide occupies residues 1 to 26; sequence MTNITKRSLVAAGVLAALMAGNVALA. C297 and C443 are oxidised to a cystine.

This sequence belongs to the bacterial solute-binding protein 5 family. In terms of assembly, the complex is composed of two ATP-binding proteins (OppD and OppF), two transmembrane proteins (OppB and OppC) and a solute-binding protein (OppA).

The protein localises to the periplasm. Its function is as follows. Part of the ABC transporter complex OppABCDF involved in the uptake of oligopeptides. Plays an important nutritional role. Binds peptides containing from two to five amino acid residues. Displays a preference for tripeptides and tetrapeptides over dipeptides and pentapeptides, for peptides composed of L-amino acids and for positively charged peptides. Cannot bind the cell wall peptide L-Ala-D-Gly-gamma-meso-diaminopimelic acid. This chain is Periplasmic oligopeptide-binding protein OppA, found in Escherichia coli (strain K12).